The sequence spans 273 residues: Aegyptin (273 aa).

The N-terminal stretch at 1 to 19 (MKPLVKLFLLFCLVGIVLS) is a signal peptide. The disordered stretch occupies residues 20–160 (RPMPEDEEPV…SEKNDPADTY (141 aa)). A compositionally biased stretch (acidic residues) spans 24–62 (EDEEPVAEGGDDDASGESEGEEETTDDAGGDGGEEENEG). Basic and acidic residues predominate over residues 63–86 (EEHAGDKDAGGEDTGKEENTGHDD). Residues 87–145 (AGEEDAGEEDAGEEDAGEEDAGEEDAEKEEGEKEDAGDDAGSDDGEEDSTGGDEGEDNA) show a composition bias toward acidic residues. Positions 137 to 273 (GGDEGEDNAE…IKSCVSSKGR (137 aa)) are mediates binding of host collagen. The segment covering 146–158 (EDSKGSEKNDPAD) has biased composition (basic and acidic residues). Intrachain disulfides connect Cys213-Cys267 and Cys235-Cys245.

The protein belongs to the aegyptin family. Monomer; exhibits non-globular elongated shape in solution. In terms of tissue distribution, female saliva (at protein level). Adult female salivary gland (at protein level).

The protein localises to the secreted. Functionally, modulates blood feeding of female mosquitoes on vertebrate hosts. Inhibits collagen-induced platelet aggregation in the host via preventing collagen interaction with its three major ligands: glycoprotein VI, integrin alpha-2/beta-1 (ITGA2/ITGB1) and von Willebrand factor (VWF). Prevents collagen-mediated thrombus formation in the host. Binds to host collagens but not to laminin, vitronectin (VTN), fibronectin (FN1), von Willebrand factor (VWF) and fibrinogen. Influences cytokine production and populations of circulating leukocytes. (Microbial infection) Reduces replication of dengue virus type 2 at inoculation site and viremia levels on day 2 post-inoculation. Promotes production of pro-inflammatory cytokines, such as GM-CSF (CSF2), IFN-gamma (IFNG), IL5 and IL6, in the lymph nodes of mice infected with dengue virus type 2. Increases the number of circulating eosinophils in mice infected with dengue virus type 2. Decreases the number of circulating monocytes in mice infected with dengue virus type 2. This Aedes aegypti (Yellowfever mosquito) protein is Aegyptin.